Consider the following 58-residue polypeptide: Potassium channel toxin alpha-KTx 16.6 (58 aa).

An N-terminal signal peptide occupies residues 1–22 (MKILSVLLIALIICSINICSEA). 3 cysteine pairs are disulfide-bonded: cysteine 29–cysteine 50, cysteine 35–cysteine 55, and cysteine 39–cysteine 57.

It belongs to the short scorpion toxin superfamily. Potassium channel inhibitor family. Alpha-KTx 16 subfamily. As to expression, expressed by the venom gland.

The protein localises to the secreted. Inhibits potassium channel. The chain is Potassium channel toxin alpha-KTx 16.6 from Buthus israelis (Israeli scorpion).